The sequence spans 346 residues: NADH-quinone oxidoreductase subunit H (346 aa).

8 helical membrane-spanning segments follow: residues 6–26 (ILFW…ACAY), 76–96 (VMYL…WSVV), 128–148 (ILFL…AGWA), 166–186 (ISYE…SGSL), 198–218 (LWNI…VAMF), 260–280 (ITMS…PFGI), 289–309 (LFGL…FLWV), and 324–344 (LGWK…SIYI).

This sequence belongs to the complex I subunit 1 family. As to quaternary structure, NDH-1 is composed of 14 different subunits. Subunits NuoA, H, J, K, L, M, N constitute the membrane sector of the complex.

The protein localises to the cell inner membrane. It carries out the reaction a quinone + NADH + 5 H(+)(in) = a quinol + NAD(+) + 4 H(+)(out). NDH-1 shuttles electrons from NADH, via FMN and iron-sulfur (Fe-S) centers, to quinones in the respiratory chain. The immediate electron acceptor for the enzyme in this species is believed to be ubiquinone. Couples the redox reaction to proton translocation (for every two electrons transferred, four hydrogen ions are translocated across the cytoplasmic membrane), and thus conserves the redox energy in a proton gradient. This subunit may bind ubiquinone. This Leptospira interrogans serogroup Icterohaemorrhagiae serovar copenhageni (strain Fiocruz L1-130) protein is NADH-quinone oxidoreductase subunit H.